A 131-amino-acid polypeptide reads, in one-letter code: Profilin-9 (131 aa).

Residues Cys-13 and Cys-115 are joined by a disulfide bond. Residues 81-97 carry the Involved in PIP2 interaction motif; the sequence is AVTRGKKGAGGITIKKT. Thr-111 carries the post-translational modification Phosphothreonine.

This sequence belongs to the profilin family. In terms of assembly, occurs in many kinds of cells as a complex with monomeric actin in a 1:1 ratio. In terms of processing, phosphorylated by MAP kinases.

It localises to the cytoplasm. It is found in the cytoskeleton. Functionally, binds to actin and affects the structure of the cytoskeleton. At high concentrations, profilin prevents the polymerization of actin, whereas it enhances it at low concentrations. The polypeptide is Profilin-9 (Phleum pratense (Common timothy)).